A 64-amino-acid chain; its full sequence is Temporin-ALd (64 aa).

Residues 1 to 22 (MFTMKKSLLLLFFLGTIHLSLC) form the signal peptide. A propeptide spanning residues 23-46 (EQERNAEEERRDDLGERQAEVEKR) is cleaved from the precursor. The residue at position 62 (Leu-62) is a Leucine amide.

Expressed by the skin glands.

The protein resides in the secreted. Antimicrobial peptide with activity against Gram-positive and Gram-negative bacteria and against fungi. Has been tested against S.aureus (MIC=1.25 ug/mL), B.pumilus (MIC=2.5 ug/mL), B.cereus (MIC=15.0 ug/mL), E.coli (MIC=1.25 ug/mL), B.dysenteriae (MIC=5.0 ug/mL), A.cacoaceticus (MIC=15.0 ug/mL), P.aeruginosa (MIC=5.0 ug/mL) and C.albicans (MIC=1.25 ug/mL). Also shows a weak hemolytic activity. In Amolops loloensis (Lolokou Sucker Frog), this protein is Temporin-ALd.